A 352-amino-acid polypeptide reads, in one-letter code: Chorismate synthase (352 aa).

Residue Arg-48 participates in NADP(+) binding. Residues 125–127 (RSS), 237–238 (NA), Gly-278, 293–297 (KPTSS), and Arg-319 each bind FMN.

Belongs to the chorismate synthase family. As to quaternary structure, homotetramer. Requires FMNH2 as cofactor.

The catalysed reaction is 5-O-(1-carboxyvinyl)-3-phosphoshikimate = chorismate + phosphate. Its pathway is metabolic intermediate biosynthesis; chorismate biosynthesis; chorismate from D-erythrose 4-phosphate and phosphoenolpyruvate: step 7/7. In terms of biological role, catalyzes the anti-1,4-elimination of the C-3 phosphate and the C-6 proR hydrogen from 5-enolpyruvylshikimate-3-phosphate (EPSP) to yield chorismate, which is the branch point compound that serves as the starting substrate for the three terminal pathways of aromatic amino acid biosynthesis. This reaction introduces a second double bond into the aromatic ring system. This is Chorismate synthase from Francisella tularensis subsp. holarctica (strain FTNF002-00 / FTA).